Here is a 514-residue protein sequence, read N- to C-terminus: 2,3-bisphosphoglycerate-independent phosphoglycerate mutase (514 aa).

Residues Asp14 and Ser64 each coordinate Mn(2+). Residue Ser64 is the Phosphoserine intermediate of the active site. Substrate-binding positions include His125, 155-156 (RD), Arg187, Arg193, 263-266 (RADR), and Lys336. Mn(2+)-binding residues include Asp403, His407, Asp444, His445, and His463.

The protein belongs to the BPG-independent phosphoglycerate mutase family. In terms of assembly, monomer. Requires Mn(2+) as cofactor.

It carries out the reaction (2R)-2-phosphoglycerate = (2R)-3-phosphoglycerate. Its pathway is carbohydrate degradation; glycolysis; pyruvate from D-glyceraldehyde 3-phosphate: step 3/5. Functionally, catalyzes the interconversion of 2-phosphoglycerate and 3-phosphoglycerate. This is 2,3-bisphosphoglycerate-independent phosphoglycerate mutase from Shewanella sp. (strain MR-4).